The primary structure comprises 173 residues: uncharacterized protein (173 aa).

One can recognise an N-acetyltransferase domain in the interval 2–171 (VTVREAKLED…PDLSALKTLL (170 aa)).

This sequence belongs to the acetyltransferase family.

This is an uncharacterized protein from Bacillus subtilis (strain 168).